Reading from the N-terminus, the 253-residue chain is Proteasome subunit alpha (253 aa).

A compositionally biased stretch (low complexity) spans 232–242; sequence AAGASTAGEAG. The interval 232 to 253 is disordered; that stretch reads AAGASTAGEAGSAEDEGSDDEK. Over residues 243–253 the composition is skewed to acidic residues; the sequence is SAEDEGSDDEK.

This sequence belongs to the peptidase T1A family. The 20S proteasome core is composed of 14 alpha and 14 beta subunits that assemble into four stacked heptameric rings, resulting in a barrel-shaped structure. The two inner rings, each composed of seven catalytic beta subunits, are sandwiched by two outer rings, each composed of seven alpha subunits. The catalytic chamber with the active sites is on the inside of the barrel. Has a gated structure, the ends of the cylinder being occluded by the N-termini of the alpha-subunits. Is capped by the proteasome-associated ATPase, ARC.

It localises to the cytoplasm. It functions in the pathway protein degradation; proteasomal Pup-dependent pathway. With respect to regulation, the formation of the proteasomal ATPase ARC-20S proteasome complex, likely via the docking of the C-termini of ARC into the intersubunit pockets in the alpha-rings, may trigger opening of the gate for substrate entry. Interconversion between the open-gate and close-gate conformations leads to a dynamic regulation of the 20S proteasome proteolysis activity. In terms of biological role, component of the proteasome core, a large protease complex with broad specificity involved in protein degradation. This chain is Proteasome subunit alpha, found in Streptomyces avermitilis (strain ATCC 31267 / DSM 46492 / JCM 5070 / NBRC 14893 / NCIMB 12804 / NRRL 8165 / MA-4680).